Consider the following 446-residue polypeptide: MTVNPAHTALWPAPHASGAVDATVHVPGSKSVTNRALVLAALASEPGWLRRPLRSRDTLLMAAALREMGVGIEETVSSSSSVGGGSDGSGEAWRVIPAALHGPATVDVGNAGTVMRFLPPVAALADGPIRFDGDPRSYERPLNGVIDALRALGARIDDDGRGALPLTVHGGGALDGGPVAIDASSSSQFVSALLLSGPRFNQGVEVRHTGSTLPSMPHIRMTVDMLRAVGAQVDTPESGGEANVWRVTPGALLGRDLTVEPDLSNAQPFLAAALVTGGKVVIPDWPERTTQPGDKLREIFTEMGGSCELTEQGLEFTGSGAVHGIDVDLSEVGELTPGIAAVAALADSPSTLRGVAHLRLHETDRLAALTKEINELGGDVTETADGLSIRPRRLHGGIFHTYDDHRMATAGAIIGLAVDGVQIENVATTAKTLPDFPDLWTGMLGN.

Lys30, Ser31, and Arg35 together coordinate 3-phosphoshikimate. Phosphoenolpyruvate is bound at residue Lys30. Phosphoenolpyruvate is bound by residues Gly112 and Arg140. 3-phosphoshikimate contacts are provided by Ser186, Ser187, Gln188, Ser215, Glu334, and His361. Gln188 contacts phosphoenolpyruvate. The active-site Proton acceptor is Glu334. Residues Arg365, Arg406, and Lys431 each coordinate phosphoenolpyruvate.

The protein belongs to the EPSP synthase family. Monomer.

It localises to the cytoplasm. It catalyses the reaction 3-phosphoshikimate + phosphoenolpyruvate = 5-O-(1-carboxyvinyl)-3-phosphoshikimate + phosphate. It functions in the pathway metabolic intermediate biosynthesis; chorismate biosynthesis; chorismate from D-erythrose 4-phosphate and phosphoenolpyruvate: step 6/7. Functionally, catalyzes the transfer of the enolpyruvyl moiety of phosphoenolpyruvate (PEP) to the 5-hydroxyl of shikimate-3-phosphate (S3P) to produce enolpyruvyl shikimate-3-phosphate and inorganic phosphate. This chain is 3-phosphoshikimate 1-carboxyvinyltransferase, found in Streptomyces avermitilis (strain ATCC 31267 / DSM 46492 / JCM 5070 / NBRC 14893 / NCIMB 12804 / NRRL 8165 / MA-4680).